The primary structure comprises 464 residues: Protein FAM90A1 (464 aa).

Disordered regions lie at residues 1–43 (MMAR…PRLK), 71–294 (PNFG…KRSA), 312–386 (PFQI…AASH), 412–437 (PSFHSPEKPGAFLAQSPHVSEKSEGP), and 445–464 (VLYEDLQVPSSSEDSDSDLE). 2 stretches are compositionally biased toward basic and acidic residues: residues 74-83 (GEKEGKENLK) and 97-114 (NKDKGEKEERPRPQDPQR). Over residues 180 to 197 (LASLSPLRKASLSSSSSL) the composition is skewed to low complexity. Polar residues predominate over residues 344 to 355 (TSPQTGTRTPAQ).

This sequence belongs to the FAM90 family.

This chain is Protein FAM90A1 (FAM90A1), found in Homo sapiens (Human).